The primary structure comprises 305 residues: Tyrosine recombinase XerC (305 aa).

The 93-residue stretch at 1–93 folds into the Core-binding (CB) domain; it reads MVLDGFAAHF…SWRQYCVWLV (93 aa). Residues 114 to 294 enclose the Tyr recombinase domain; sequence RVPKALPQEW…DFDHIARLYD (181 aa). Active-site residues include R155, K179, H246, R249, and H272. The O-(3'-phospho-DNA)-tyrosine intermediate role is filled by Y281.

This sequence belongs to the 'phage' integrase family. XerC subfamily. Forms a cyclic heterotetrameric complex composed of two molecules of XerC and two molecules of XerD.

The protein resides in the cytoplasm. Site-specific tyrosine recombinase, which acts by catalyzing the cutting and rejoining of the recombining DNA molecules. The XerC-XerD complex is essential to convert dimers of the bacterial chromosome into monomers to permit their segregation at cell division. It also contributes to the segregational stability of plasmids. This Neisseria meningitidis serogroup C / serotype 2a (strain ATCC 700532 / DSM 15464 / FAM18) protein is Tyrosine recombinase XerC.